A 264-amino-acid polypeptide reads, in one-letter code: MLVKTRGVILKEIKFRDQSKICPVFTEHFGKISVILKGVRNPKNKLSGVFSTGNMVELVIYKKQNRDLHLVSDALLLQSPMSARPDMERFTTIYQLIETLKQVTGSEEPHPVLFRFLAATIEELCKPERDYQLVLAWFLIRLVTVLGFEPELEQCVISGEPLIPAAEAMAPDENLYFLFDPGGIAFAGPSALIRSEKRALPALSFRLLRWLSRQNIDALPDIRIPEEHPRRLCELLQDYCAVHIDHNPPVRNRRIISQIRPDNT.

Belongs to the RecO family.

Functionally, involved in DNA repair and RecF pathway recombination. The sequence is that of DNA repair protein RecO from Prosthecochloris aestuarii (strain DSM 271 / SK 413).